The primary structure comprises 179 residues: MKFSLFFGVLFLAILHSCLSESEKDLTDEDHFRSSDSFLSEIQEESRGKKCIERNKECTNDRHGCCRGKIFKDKCECVGSGGKERCVCKQKKWAKIIESYIGDIPTLPKPEDDKCVPKHEDCSERKNDCCKSGLFTLKCKCYDMQDDEDGKKTELCGCVQPFEHKAIEQALRFGKWMVG.

The signal sequence occupies residues 1–20 (MKFSLFFGVLFLAILHSCLS). Residues 21–47 (ESEKDLTDEDHFRSSDSFLSEIQEESR) constitute a propeptide that is removed on maturation. The Processing quadruplet motif signature appears at 44-47 (EESR). 8 disulfides stabilise this stretch: Cys-51–Cys-66, Cys-58–Cys-75, Cys-65–Cys-88, Cys-77–Cys-86, Cys-115–Cys-130, Cys-122–Cys-139, Cys-129–Cys-158, and Cys-141–Cys-156. Val-178 is modified (valine amide).

Belongs to the spider toxin CSTX family. Double-CSTX subfamily. Post-translationally, cleavage of the propeptide depends on the processing quadruplet motif (XXXR, with at least one of X being E). As to expression, expressed by the venom gland.

It is found in the secreted. In terms of biological role, spider venom toxin that exhibits cytolytic activity by forming an alpha-helix across the membrane. Lethal to insect larvae. The sequence is that of DELTA-miturgitoxin-Cp2a from Cheiracanthium punctorium (Yellow sac spider).